A 123-amino-acid polypeptide reads, in one-letter code: CD59A glycoprotein (123 aa).

The N-terminal stretch at 1 to 23 is a signal peptide; it reads MRAQRGLILLLLLLAVFCSTAVS. A UPAR/Ly6 domain is found at 24 to 96; the sequence is LTCYHCFQPV…CCQFNLCNKS (73 aa). 5 disulfide bridges follow: cysteine 26/cysteine 50, cysteine 29/cysteine 37, cysteine 43/cysteine 63, cysteine 69/cysteine 87, and cysteine 88/cysteine 93. The N-linked (GlcNAc...) asparagine glycan is linked to asparagine 40. Asparagine 94 carries an N-linked (GlcNAc...) asparagine glycan. The propeptide at 97 to 123 is removed in mature form; that stretch reads DGSLGKTPLLGTSVLVAILNLCFLSHL.

Interacts with T-cell surface antigen CD2. N- and O-glycosylated. Expressed in all tissues examined (liver, kidney, spleen, thymus, brain and heart). Low levels in thymus. Also expressed in mononuclear cells, erythrocytes and platelets. Barely detected in neutrophils.

It localises to the cell membrane. It is found in the secreted. Potent inhibitor of the complement membrane attack complex (MAC) action, which protects self-cells from damage during complement activation. Acts by binding to the beta-haipins of C8 (C8A and C8B) components of the assembling MAC, forming an intermolecular beta-sheet that prevents incorporation of the multiple copies of C9 required for complete formation of the osmolytic pore. The polypeptide is CD59A glycoprotein (Mus musculus (Mouse)).